The sequence spans 933 residues: Melanoma-associated antigen E1 (933 aa).

Disordered stretches follow at residues 1–113 (MSLV…VSAG), 149–236 (GASI…GINL), 256–282 (SDIS…VQST), and 360–393 (TSGL…EDEN). Over residues 8–23 (SRRRRGGRANGRKNSG) the composition is skewed to basic residues. 4 stretches are compositionally biased toward polar residues: residues 64 to 97 (GGSS…QLPT), 149 to 166 (GASI…NVQP), 173 to 184 (GTSVPPTFSEES), and 219 to 236 (APST…GINL). 2 MAGE domains span residues 467 to 666 (MEQN…YNEA) and 721 to 912 (LESK…YREA). The tract at residues 719–933 (SRLESKSRKL…RRPLVVRNLR (215 aa)) is interaction with DTNA.

As to quaternary structure, interacts with DTNA. Interacts with TRIM28.

The protein resides in the cytoplasm. It is found in the perinuclear region. Its subcellular location is the nucleus. The protein localises to the cell membrane. In terms of biological role, may enhance ubiquitin ligase activity of RING-type zinc finger-containing E3 ubiquitin-protein ligases. Proposed to act through recruitment and/or stabilization of the Ubl-conjugating enzyme (E2) at the E3:substrate complex. The protein is Melanoma-associated antigen E1 (Magee1) of Rattus norvegicus (Rat).